The following is a 2206-amino-acid chain: Genome polyprotein (2206 aa).

A lipid anchor (N-myristoyl glycine; by host) is attached at Gly2. Residues 2–1517 (GAQVSSQKVG…NINRAMTILQ (1516 aa)) lie on the Cytoplasmic side of the membrane. Amphipathic alpha-helix regions lie at residues 579-599 (GVDDLITEVAQNALALSLPKP) and 579-603 (GVDDLITEVAQNALALSLPKPQSNL). Residues His898 and Asp916 each act as for protease 2A activity in the active site. Zn(2+)-binding residues include Cys933 and Cys935. Catalysis depends on Cys987, which acts as the For protease 2A activity. 2 residues coordinate Zn(2+): Cys993 and His995. A membrane-binding region spans residues 1125–1197 (GDSWLKKFTE…HQSCPSQEHQ (73 aa)). The oligomerization stretch occupies residues 1125–1263 (GDSWLKKFTE…SPGTGKSVAT (139 aa)). An RNA-binding region spans residues 1146 to 1150 (SNKIS). In terms of domain architecture, SF3 helicase spans 1229–1385 (EHTINNYIQF…SEYSRDGKLN (157 aa)). 1253–1260 (GSPGTGKS) contacts ATP. Residues Cys1393, Cys1396, Cys1405, and Cys1410 each contribute to the Zn(2+) site. The segment at 1393-1410 (CKNCHQPANFKRCCPLVC) adopts a C4-type zinc-finger fold. An RNA-binding region spans residues 1437–1444 (EKNRRSNI). The tract at residues 1448 to 1453 (MEALFQ) is oligomerization. The stretch at 1518–1533 (AVTTFAAVAGVVYVMY) is an intramembrane region. Residues 1534–2206 (KLFAGHQGAY…TLYRRWLDSF (673 aa)) lie on the Cytoplasmic side of the membrane. Tyr1543 bears the O-(5'-phospho-RNA)-tyrosine mark. Residues 1563-1741 (GPGFDYAVAM…FAAALKRSYF (179 aa)) enclose the Peptidase C3 domain. Active-site for protease 3C activity residues include His1602, Glu1633, and Cys1709. The region spanning 1972-2087 (EKLFAFDYTG…SYPHEVDASL (116 aa)) is the RdRp catalytic domain. Mg(2+) is bound by residues Asp1978 and Asp2073.

It belongs to the picornaviruses polyprotein family. As to quaternary structure, interacts with capsid protein VP1 and capsid protein VP3 to form heterotrimeric protomers. Interacts with capsid protein VP0, and capsid protein VP3 to form heterotrimeric protomers. Interacts with human PVR. Five protomers subsequently associate to form pentamers which serve as building blocks for the capsid. Interacts with capsid protein VP2, capsid protein VP3 and capsid protein VP4 following cleavage of capsid protein VP0. In terms of assembly, interacts with capsid protein VP1 and capsid protein VP3 in the mature capsid. As to quaternary structure, interacts with capsid protein VP0 and capsid protein VP1 to form heterotrimeric protomers. Five protomers subsequently associate to form pentamers which serve as building blocks for the capsid. Interacts with capsid protein VP4 in the mature capsid. Interacts with protein 2C; this interaction may be important for virion morphogenesis. Interacts with capsid protein VP1 and capsid protein VP3. In terms of assembly, homodimer. As to quaternary structure, homohexamer; forms a hexameric ring structure with 6-fold symmetry characteristic of AAA+ ATPases. Interacts (via N-terminus) with host RTN3 (via reticulon domain); this interaction is important for viral replication. Interacts with capsid protein VP3; this interaction may be important for virion morphogenesis. Interacts with protein 3CD. In terms of assembly, homodimer. Interacts with host GBF1. Interacts (via GOLD domain) with host ACBD3 (via GOLD domain); this interaction allows the formation of a viral protein 3A/ACBD3 heterotetramer with a 2:2 stoichiometry, which will stimulate the recruitment of host PI4KB in order to synthesize PI4P at the viral RNA replication sites. As to quaternary structure, interacts with RNA-directed RNA polymerase. Interacts with protein 3AB and with RNA-directed RNA polymerase. In terms of assembly, interacts with Viral protein genome-linked and with protein 3CD. Mg(2+) is required as a cofactor. In terms of processing, specific enzymatic cleavages in vivo by the viral proteases yield processing intermediates and the mature proteins. Myristoylation is required for the formation of pentamers during virus assembly. Further assembly of 12 pentamers and a molecule of genomic RNA generates the provirion. Post-translationally, during virion maturation, immature virions are rendered infectious following cleavage of VP0 into VP4 and VP2. This maturation seems to be an autocatalytic event triggered by the presence of RNA in the capsid and it is followed by a conformational change infectious virion. In terms of processing, myristoylation is required during RNA encapsidation and formation of the mature virus particle. VPg is uridylylated by the polymerase into VPg-pUpU. This acts as a nucleotide-peptide primer for the genomic RNA replication.

The protein localises to the virion. It localises to the host cytoplasm. The protein resides in the host cytoplasmic vesicle membrane. Its subcellular location is the host nucleus. The catalysed reaction is a ribonucleoside 5'-triphosphate + H2O = a ribonucleoside 5'-diphosphate + phosphate + H(+). It catalyses the reaction Selective cleavage of Tyr-|-Gly bond in the picornavirus polyprotein.. The enzyme catalyses RNA(n) + a ribonucleoside 5'-triphosphate = RNA(n+1) + diphosphate. It carries out the reaction Selective cleavage of Gln-|-Gly bond in the poliovirus polyprotein. In other picornavirus reactions Glu may be substituted for Gln, and Ser or Thr for Gly.. Its activity is regulated as follows. Replication or transcription is subject to high level of random mutations by the nucleotide analog ribavirin. In terms of biological role, forms an icosahedral capsid of pseudo T=3 symmetry with capsid proteins VP2 and VP3. The capsid is 300 Angstroms in diameter, composed of 60 copies of each capsid protein and enclosing the viral positive strand RNA genome. Capsid protein VP1 mainly forms the vertices of the capsid. Capsid protein VP1 interacts with host cell receptor PVR to provide virion attachment to target host cells. This attachment induces virion internalization predominantly through clathrin- and caveolin-independent endocytosis in Hela cells and through caveolin-mediated endocytosis in brain microvascular endothelial cells. Tyrosine kinases are probably involved in the entry process. Virus binding to PVR induces increased junctional permeability and rearrangement of junctional proteins. Modulation of endothelial tight junctions, as well as cytolytic infection of endothelial cells themselves, may result in loss of endothelial integrity which may help the virus to reach the CNS. After binding to its receptor, the capsid undergoes conformational changes. Capsid protein VP1 N-terminus (that contains an amphipathic alpha-helix) and capsid protein VP4 are externalized. Together, they shape a pore in the host membrane through which viral genome is translocated to host cell cytoplasm. Its function is as follows. Forms an icosahedral capsid of pseudo T=3 symmetry with capsid proteins VP2 and VP3. The capsid is 300 Angstroms in diameter, composed of 60 copies of each capsid protein and enclosing the viral positive strand RNA genome. Functionally, lies on the inner surface of the capsid shell. After binding to the host receptor, the capsid undergoes conformational changes. Capsid protein VP4 is released, Capsid protein VP1 N-terminus is externalized, and together, they shape a pore in the host membrane through which the viral genome is translocated into the host cell cytoplasm. Component of immature procapsids, which is cleaved into capsid proteins VP4 and VP2 after maturation. Allows the capsid to remain inactive before the maturation step. In terms of biological role, cysteine protease that cleaves viral polyprotein and specific host proteins. It is responsible for the autocatalytic cleavage between the P1 and P2 regions, which is the first cleavage occurring in the polyprotein. Also cleaves the host translation initiation factor EIF4G1, in order to shut down the capped cellular mRNA translation. Inhibits the host nucleus-cytoplasm protein and RNA trafficking by cleaving host members of the nuclear pores including NUP98, NUP62 and NUP153. Counteracts stress granule formation probably by antagonizing its assembly or promoting its dissassembly. Cleaves and inhibits host IFIH1/MDA5, thereby inhibiting the type-I IFN production and the establishment of the antiviral state. Cleaves and inhibits host MAVS, thereby inhibiting the type-I IFN production and the establishment of the antiviral state. Its function is as follows. Plays an essential role in the virus replication cycle by acting as a viroporin. Creates a pore in the host endoplasmic reticulum and as a consequence releases Ca2+ in the cytoplasm of infected cell. In turn, high levels of cytoplasmic calcium may trigger membrane trafficking and transport of viral ER-associated proteins to viroplasms, sites of viral genome replication. Functionally, induces and associates with structural rearrangements of intracellular membranes. Displays RNA-binding, nucleotide binding and NTPase activities. May play a role in virion morphogenesis and viral RNA encapsidation by interacting with the capsid protein VP3. Localizes the viral replication complex to the surface of membranous vesicles. Together with protein 3CD binds the Cis-Active RNA Element (CRE) which is involved in RNA synthesis initiation. Acts as a cofactor to stimulate the activity of 3D polymerase, maybe through a nucleid acid chaperone activity. In terms of biological role, localizes the viral replication complex to the surface of membranous vesicles. It inhibits host cell endoplasmic reticulum-to-Golgi apparatus transport and causes the disassembly of the Golgi complex, possibly through GBF1 interaction. This would result in depletion of MHC, trail receptors and IFN receptors at the host cell surface. Plays an essential role in viral RNA replication by recruiting ACBD3 and PI4KB at the viral replication sites, thereby allowing the formation of the rearranged membranous structures where viral replication takes place. Its function is as follows. Acts as a primer for viral RNA replication and remains covalently bound to viral genomic RNA. VPg is uridylylated prior to priming replication into VPg-pUpU. The oriI viral genomic sequence may act as a template for this. The VPg-pUpU is then used as primer on the genomic RNA poly(A) by the RNA-dependent RNA polymerase to replicate the viral genome. During genome replication, the VPg-RNA linkage is removed by the host TDP2, thereby accelerating replication. During the late stage of the replication cycle, host TDP2 is excluded from sites of viral RNA synthesis and encapsidation, allowing for the generation of progeny virions. Functionally, involved in the viral replication complex and viral polypeptide maturation. It exhibits protease activity with a specificity and catalytic efficiency that is different from protease 3C. Protein 3CD lacks polymerase activity. Protein 3CD binds to the 5'UTR of the viral genome. Major viral protease that mediates proteolytic processing of the polyprotein. Cleaves host EIF5B, contributing to host translation shutoff. Also cleaves host PABPC1, contributing to host translation shutoff. Cleaves host RIGI and thus contributes to the inhibition of type I interferon production. Cleaves host NLRP1, triggers host N-glycine-mediated degradation of the autoinhibitory NLRP1 N-terminal fragment. Inhibits the integrated stress response (ISR) in the infected cell by cleaving host G3BP1. Stress granule formation is thus inhibited, which allows protein synthesis and viral replication. In terms of biological role, replicates the viral genomic RNA on the surface of intracellular membranes. May form linear arrays of subunits that propagate along a strong head-to-tail interaction called interface-I. Covalently attaches UMP to a tyrosine of VPg, which is used to prime RNA synthesis. The positive stranded RNA genome is first replicated at virus induced membranous vesicles, creating a dsRNA genomic replication form. This dsRNA is then used as template to synthesize positive stranded RNA genomes. ss(+)RNA genomes are either translated, replicated or encapsidated. This is Genome polyprotein from Poliovirus type 3 (strain 23127).